The chain runs to 107 residues: MTELTLSDLEQIVATRAGAAPEDSWTAKLVAAGQPKAAKKLGEEAVETVIAAVSGDRKNLIDESADLLYHLMVVLNIAAVPLQDVMSELARRTSQSGLQEKANRQNP.

The protein belongs to the PRA-PH family.

The protein localises to the cytoplasm. It catalyses the reaction 1-(5-phospho-beta-D-ribosyl)-ATP + H2O = 1-(5-phospho-beta-D-ribosyl)-5'-AMP + diphosphate + H(+). It participates in amino-acid biosynthesis; L-histidine biosynthesis; L-histidine from 5-phospho-alpha-D-ribose 1-diphosphate: step 2/9. The chain is Phosphoribosyl-ATP pyrophosphatase from Sinorhizobium fredii (strain NBRC 101917 / NGR234).